The sequence spans 145 residues: Ribonuclease HI (145 aa).

The 142-residue stretch at 1-142 (MNQTVYLYTD…ADDLANRGAA (142 aa)) folds into the RNase H type-1 domain. Mg(2+)-binding residues include aspartate 10, glutamate 48, aspartate 70, and aspartate 134.

It belongs to the RNase H family. Monomer. It depends on Mg(2+) as a cofactor.

Its subcellular location is the cytoplasm. The enzyme catalyses Endonucleolytic cleavage to 5'-phosphomonoester.. Its function is as follows. Endonuclease that specifically degrades the RNA of RNA-DNA hybrids. In Neisseria meningitidis serogroup A / serotype 4A (strain DSM 15465 / Z2491), this protein is Ribonuclease HI.